Consider the following 330-residue polypeptide: Induced myeloid leukemia cell differentiation protein Mcl-1 homolog (330 aa).

Residues 85–155 are PEST-like; sequence LAVPPEEMAA…PPEEEDDELY (71 aa). The residue at position 101 (S101) is a Phosphoserine. K116 participates in a covalent cross-link: Glycyl lysine isopeptide (Lys-Gly) (interchain with G-Cter in ubiquitin). The tract at residues 129 to 153 is disordered; the sequence is EAAKSSGADGSLPSTPPPPEEEDDE. S139 is subject to Phosphoserine; by GSK3-alpha and GSK3-beta. S142 carries the phosphoserine modification. T143 bears the Phosphothreonine; by MAPK mark. Glycyl lysine isopeptide (Lys-Gly) (interchain with G-Cter in ubiquitin) cross-links involve residues K174 and K177. The short motif at 189 to 203 is the BH3 element; it reads ALETLRRVGDGVQRN. The BH1 signature appears at 232–252; the sequence is HVFKDGVTNWGRIVTLISFGA. Residues 284 to 299 carry the BH2 motif; the sequence is DWLVKQRGWDGFVEFF. The chain crosses the membrane as a helical span at residues 307–329; sequence GIRNVLLAFAGVAGVGAGLAYLI.

It belongs to the Bcl-2 family. As to quaternary structure, interacts with HIF3A (via C-terminus domain). Interacts with BOK, BIK, BAX, BAK1, and TPT1. Interacts with unphosphorylated BAD. Interacts with BMF, BBC3 and PMAIP1. Interacts with BOP. Interacts with BCL2L11; may sequester BCL2L11 to prevent its pro-apoptotic activity. Interacts with GIMAP5 and HSPA8/HSC70; the interaction between HSPA8 and MCL1 is impaired in the absence of GIMAP5. In terms of processing, cleaved by CASP3 during apoptosis, yielding a pro-apoptotic C-terminal fragment. Post-translationally, rapidly degraded in the absence of phosphorylation in the PEST region. Phosphorylated on Ser-139, by GSK3, in response to IL3/interleukin-3 withdrawal. Phosphorylation at Ser-139 induces ubiquitination and proteasomal degradation, abrogating the anti-apoptotic activity. Treatment with taxol or okadaic acid induces phosphorylation on additional sites. In terms of processing, ubiquitinated. Ubiquitination is induced by phosphorylation at Ser-139. Deubiquitinated by USP20; leading to increased stability. In terms of tissue distribution, ubiquitous. Highly expressed in heart, spleen, lung, liver, skeletal muscle and kidney. Detected at lower levels in brain, ovary, oviduct and testis.

It localises to the membrane. It is found in the cytoplasm. Its subcellular location is the mitochondrion. The protein resides in the nucleus. The protein localises to the nucleoplasm. Functionally, involved in the regulation of apoptosis versus cell survival, and in the maintenance of viability but not of proliferation. Mediates its effects by interactions with a number of other regulators of apoptosis. In Rattus norvegicus (Rat), this protein is Induced myeloid leukemia cell differentiation protein Mcl-1 homolog (Mcl1).